The sequence spans 509 residues: Anaerobic nitric oxide reductase flavorubredoxin (509 aa).

Residues 30–210 are zinc metallo-hydrolase; that stretch reads LQGSSYNSYL…PFSRLVTAKI (181 aa). His79, Glu81, Asp83, His147, Asp166, and His227 together coordinate Fe cation. One can recognise a Flavodoxin-like domain in the interval 254–393; that stretch reads ITLFYDTMSN…VCREHGREIA (140 aa). Residues 260-264 and 342-369 contribute to the FMN site; these read TMSNN and AFGSYGWNGGAVDRVQTRLMDAGFETTL. Positions 457-508 constitute a Rubredoxin-like domain; that stretch reads SGCMQCSVCQWIYDPALGEPMQDVTPGTMWSDVPDSFLCPECGLGKDVFNPI. Residues Cys462, Cys465, Cys495, and Cys498 each contribute to the Fe cation site.

The protein in the N-terminal section; belongs to the zinc metallo-hydrolase group 3 family. In terms of assembly, homotetramer. The cofactor is Fe cation. Requires FMN as cofactor.

It localises to the cytoplasm. The protein operates within nitrogen metabolism; nitric oxide reduction. Its function is as follows. Anaerobic nitric oxide reductase; uses NADH to detoxify nitric oxide (NO), protecting several 4Fe-4S NO-sensitive enzymes. Has at least 2 reductase partners, only one of which (NorW, flavorubredoxin reductase) has been identified. NO probably binds to the di-iron center; electrons enter from the NorW at rubredoxin and are transferred sequentially to the FMN center and the di-iron center. Also able to function as an aerobic oxygen reductase. The polypeptide is Anaerobic nitric oxide reductase flavorubredoxin (Pectobacterium atrosepticum (strain SCRI 1043 / ATCC BAA-672) (Erwinia carotovora subsp. atroseptica)).